Here is a 431-residue protein sequence, read N- to C-terminus: Histidine--tRNA ligase (431 aa).

The tract at residues 1–20 (MALQRPKGTQDHLPDGSPKL) is disordered.

This sequence belongs to the class-II aminoacyl-tRNA synthetase family. In terms of assembly, homodimer.

Its subcellular location is the cytoplasm. The catalysed reaction is tRNA(His) + L-histidine + ATP = L-histidyl-tRNA(His) + AMP + diphosphate + H(+). This chain is Histidine--tRNA ligase, found in Deinococcus geothermalis (strain DSM 11300 / CIP 105573 / AG-3a).